We begin with the raw amino-acid sequence, 273 residues long: Dermonecrotic toxin LhSicTox-alphaIA2av (273 aa).

Residue H5 is part of the active site. The Mg(2+) site is built by E25 and D27. The Nucleophile role is filled by H41. 2 cysteine pairs are disulfide-bonded: C45/C51 and C47/C190. D85 contributes to the Mg(2+) binding site.

The protein belongs to the arthropod phospholipase D family. Class II subfamily. Mg(2+) serves as cofactor. Expressed by the venom gland.

The protein localises to the secreted. The enzyme catalyses an N-(acyl)-sphingosylphosphocholine = an N-(acyl)-sphingosyl-1,3-cyclic phosphate + choline. It carries out the reaction an N-(acyl)-sphingosylphosphoethanolamine = an N-(acyl)-sphingosyl-1,3-cyclic phosphate + ethanolamine. It catalyses the reaction a 1-acyl-sn-glycero-3-phosphocholine = a 1-acyl-sn-glycero-2,3-cyclic phosphate + choline. The catalysed reaction is a 1-acyl-sn-glycero-3-phosphoethanolamine = a 1-acyl-sn-glycero-2,3-cyclic phosphate + ethanolamine. Functionally, dermonecrotic toxins cleave the phosphodiester linkage between the phosphate and headgroup of certain phospholipids (sphingolipid and lysolipid substrates), forming an alcohol (often choline) and a cyclic phosphate. This toxin acts on sphingomyelin (SM). It may also act on ceramide phosphoethanolamine (CPE), lysophosphatidylcholine (LPC) and lysophosphatidylethanolamine (LPE), but not on lysophosphatidylserine (LPS), and lysophosphatidylglycerol (LPG). It acts by transphosphatidylation, releasing exclusively cyclic phosphate products as second products. Induces dermonecrosis, hemolysis, increased vascular permeability, edema, inflammatory response, and platelet aggregation. The sequence is that of Dermonecrotic toxin LhSicTox-alphaIA2av from Loxosceles hirsuta (Recluse spider).